Consider the following 121-residue polypeptide: Small ribosomal subunit protein bS21m (121 aa).

The transit peptide at 1-14 directs the protein to the mitochondrion; sequence MNSSYFPGVLGVRW.

This sequence belongs to the bacterial ribosomal protein bS21 family. In terms of assembly, component of the mitochondrial small ribosomal subunit (mt-SSU). Mature yeast 74S mitochondrial ribosomes consist of a small (37S) and a large (54S) subunit. The 37S small subunit contains a 15S ribosomal RNA (15S mt-rRNA) and at least 32 different proteins. The 54S large subunit contains a 21S rRNA (21S mt-rRNA) and at least 45 different proteins.

It is found in the mitochondrion. Functionally, component of the mitochondrial ribosome (mitoribosome), a dedicated translation machinery responsible for the synthesis of mitochondrial genome-encoded proteins, including at least some of the essential transmembrane subunits of the mitochondrial respiratory chain. The mitoribosomes are attached to the mitochondrial inner membrane and translation products are cotranslationally integrated into the membrane. In Schizosaccharomyces pombe (strain 972 / ATCC 24843) (Fission yeast), this protein is Small ribosomal subunit protein bS21m (mrp21).